Reading from the N-terminus, the 494-residue chain is Prenylcysteine oxidase 1-like (494 aa).

The N-terminal stretch at 1-22 is a signal peptide; the sequence is MARAAPLLAALTALLAAAAAGG. N-linked (GlcNAc...) asparagine glycosylation is present at asparagine 342.

This sequence belongs to the prenylcysteine oxidase family. The cofactor is FAD.

It is found in the secreted. In terms of biological role, likely to have oxidoreductase activity. Required in the mevalonate pathway to regulate prenylation and enhances the bactericidal activity of neutrophils. The sequence is that of Prenylcysteine oxidase 1-like (PCYOX1L) from Homo sapiens (Human).